We begin with the raw amino-acid sequence, 118 residues long: Large ribosomal subunit protein bL20 (118 aa).

The protein belongs to the bacterial ribosomal protein bL20 family.

Functionally, binds directly to 23S ribosomal RNA and is necessary for the in vitro assembly process of the 50S ribosomal subunit. It is not involved in the protein synthesizing functions of that subunit. This is Large ribosomal subunit protein bL20 from Pseudomonas syringae pv. syringae (strain B728a).